Here is a 310-residue protein sequence, read N- to C-terminus: Translocator protein BipD (310 aa).

2 coiled-coil regions span residues 127–171 (DPIL…LQDY) and 250–299 (DTAR…AIST).

The protein belongs to the invasin protein D family.

It is found in the secreted. Its function is as follows. Required for invasion of epithelial cells, as well as for survival within host cells, escape from endocytic vesicles and subsequent actin-tail formation. Probably regulates the secretion of effectors BipB and BipC and their final integration into the target cell membrane. This Burkholderia mallei (strain NCTC 10247) protein is Translocator protein BipD (bipD).